Here is a 252-residue protein sequence, read N- to C-terminus: Imidazole glycerol phosphate synthase subunit HisF (252 aa).

Residues Asp11 and Asp130 contribute to the active site.

It belongs to the HisA/HisF family. In terms of assembly, heterodimer of HisH and HisF.

It localises to the cytoplasm. It catalyses the reaction 5-[(5-phospho-1-deoxy-D-ribulos-1-ylimino)methylamino]-1-(5-phospho-beta-D-ribosyl)imidazole-4-carboxamide + L-glutamine = D-erythro-1-(imidazol-4-yl)glycerol 3-phosphate + 5-amino-1-(5-phospho-beta-D-ribosyl)imidazole-4-carboxamide + L-glutamate + H(+). It participates in amino-acid biosynthesis; L-histidine biosynthesis; L-histidine from 5-phospho-alpha-D-ribose 1-diphosphate: step 5/9. IGPS catalyzes the conversion of PRFAR and glutamine to IGP, AICAR and glutamate. The HisF subunit catalyzes the cyclization activity that produces IGP and AICAR from PRFAR using the ammonia provided by the HisH subunit. In Polynucleobacter asymbioticus (strain DSM 18221 / CIP 109841 / QLW-P1DMWA-1) (Polynucleobacter necessarius subsp. asymbioticus), this protein is Imidazole glycerol phosphate synthase subunit HisF.